Here is a 73-residue protein sequence, read N- to C-terminus: MLLTNVIKSASGYPKHSLLKSNADWFFIFRFTVPDLLISSTNSSTVAHSLISNLLVNCFKPALPTLEKYFPLT.

This is an uncharacterized protein from Vaccinia virus (strain Copenhagen) (VACV).